Consider the following 194-residue polypeptide: Peptidyl-tRNA hydrolase (194 aa).

A tRNA-binding site is contributed by tyrosine 16. Histidine 21 acts as the Proton acceptor in catalysis. TRNA is bound by residues phenylalanine 67, asparagine 69, and asparagine 115.

Belongs to the PTH family. Monomer.

It localises to the cytoplasm. The catalysed reaction is an N-acyl-L-alpha-aminoacyl-tRNA + H2O = an N-acyl-L-amino acid + a tRNA + H(+). In terms of biological role, hydrolyzes ribosome-free peptidyl-tRNAs (with 1 or more amino acids incorporated), which drop off the ribosome during protein synthesis, or as a result of ribosome stalling. Catalyzes the release of premature peptidyl moieties from peptidyl-tRNA molecules trapped in stalled 50S ribosomal subunits, and thus maintains levels of free tRNAs and 50S ribosomes. This is Peptidyl-tRNA hydrolase from Citrobacter koseri (strain ATCC BAA-895 / CDC 4225-83 / SGSC4696).